Reading from the N-terminus, the 418-residue chain is Queuine tRNA-ribosyltransferase accessory subunit 2 (418 aa).

Zn(2+)-binding residues include C325, C327, C330, and H356.

Belongs to the queuine tRNA-ribosyltransferase family. QTRT2 subfamily. As to quaternary structure, heterodimer of a catalytic subunit and an accessory subunit. It depends on Zn(2+) as a cofactor.

The protein resides in the cytoplasm. In terms of biological role, non-catalytic subunit of the queuine tRNA-ribosyltransferase (TGT) that catalyzes the base-exchange of a guanine (G) residue with queuine (Q) at position 34 (anticodon wobble position) in tRNAs with GU(N) anticodons (tRNA-Asp, -Asn, -His and -Tyr), resulting in the hypermodified nucleoside queuosine (7-(((4,5-cis-dihydroxy-2-cyclopenten-1-yl)amino)methyl)-7-deazaguanosine). The sequence is that of Queuine tRNA-ribosyltransferase accessory subunit 2 from Drosophila sechellia (Fruit fly).